Here is an 873-residue protein sequence, read N- to C-terminus: Leucine--tRNA ligase (873 aa).

The 'HIGH' region signature appears at Pro48–His58. Residues Lys636–Ser640 carry the 'KMSKS' region motif. Lys639 serves as a coordination point for ATP.

Belongs to the class-I aminoacyl-tRNA synthetase family.

It localises to the cytoplasm. It catalyses the reaction tRNA(Leu) + L-leucine + ATP = L-leucyl-tRNA(Leu) + AMP + diphosphate. The sequence is that of Leucine--tRNA ligase from Cupriavidus pinatubonensis (strain JMP 134 / LMG 1197) (Cupriavidus necator (strain JMP 134)).